Consider the following 381-residue polypeptide: Protein-glutamate methylesterase/protein-glutamine glutaminase (381 aa).

The Response regulatory domain maps to 8–125 (QVLCIDDSAL…RDGMNEYADQ (118 aa)). The residue at position 59 (aspartate 59) is a 4-aspartylphosphate. In terms of domain architecture, CheB-type methylesterase spans 183-375 (FSSTEKLIIV…PHVLARLSAH (193 aa)). Active-site residues include serine 195, histidine 221, and aspartate 317.

This sequence belongs to the CheB family. Post-translationally, phosphorylated by CheA. Phosphorylation of the N-terminal regulatory domain activates the methylesterase activity.

The protein localises to the cytoplasm. The enzyme catalyses [protein]-L-glutamate 5-O-methyl ester + H2O = L-glutamyl-[protein] + methanol + H(+). It catalyses the reaction L-glutaminyl-[protein] + H2O = L-glutamyl-[protein] + NH4(+). In terms of biological role, involved in chemotaxis. Part of a chemotaxis signal transduction system that modulates chemotaxis in response to various stimuli. Catalyzes the demethylation of specific methylglutamate residues introduced into the chemoreceptors (methyl-accepting chemotaxis proteins or MCP) by CheR. Also mediates the irreversible deamidation of specific glutamine residues to glutamic acid. This Ralstonia nicotianae (strain ATCC BAA-1114 / GMI1000) (Ralstonia solanacearum) protein is Protein-glutamate methylesterase/protein-glutamine glutaminase.